The chain runs to 264 residues: Phosphatidylglycerol--prolipoprotein diacylglyceryl transferase (264 aa).

A run of 3 helical transmembrane segments spans residues 17–37, 59–79, and 95–115; these read LAIH…LWLA, LLFY…VLFY, and WKGG…MALF. Arginine 142 lines the a 1,2-diacyl-sn-glycero-3-phospho-(1'-sn-glycerol) pocket. The next 2 helical transmembrane spans lie at 205–225 and 241–261; these read GQVS…AEYF and MGQW…VWAG.

It belongs to the Lgt family.

It localises to the cell inner membrane. The catalysed reaction is L-cysteinyl-[prolipoprotein] + a 1,2-diacyl-sn-glycero-3-phospho-(1'-sn-glycerol) = an S-1,2-diacyl-sn-glyceryl-L-cysteinyl-[prolipoprotein] + sn-glycerol 1-phosphate + H(+). It functions in the pathway protein modification; lipoprotein biosynthesis (diacylglyceryl transfer). Catalyzes the transfer of the diacylglyceryl group from phosphatidylglycerol to the sulfhydryl group of the N-terminal cysteine of a prolipoprotein, the first step in the formation of mature lipoproteins. In Methylibium petroleiphilum (strain ATCC BAA-1232 / LMG 22953 / PM1), this protein is Phosphatidylglycerol--prolipoprotein diacylglyceryl transferase.